The sequence spans 65 residues: uncharacterized protein (65 aa).

2 consecutive transmembrane segments (helical) span residues 12–31 (IVKWLIFTILLVASISLIVV) and 41–63 (LVARATPLAIVVGLSAIAAAIIV).

Its subcellular location is the cell membrane. This is an uncharacterized protein from Halalkalibacterium halodurans (strain ATCC BAA-125 / DSM 18197 / FERM 7344 / JCM 9153 / C-125) (Bacillus halodurans).